Here is a 345-residue protein sequence, read N- to C-terminus: Biotin synthase (345 aa).

A Radical SAM core domain is found at 60–287 (NQVQLSTLLS…RTMVRLSAGR (228 aa)). [4Fe-4S] cluster is bound by residues Cys-75, Cys-79, and Cys-82. The [2Fe-2S] cluster site is built by Cys-119, Cys-150, Cys-210, and Arg-282.

It belongs to the radical SAM superfamily. Biotin synthase family. In terms of assembly, homodimer. It depends on [4Fe-4S] cluster as a cofactor. [2Fe-2S] cluster is required as a cofactor.

It catalyses the reaction (4R,5S)-dethiobiotin + (sulfur carrier)-SH + 2 reduced [2Fe-2S]-[ferredoxin] + 2 S-adenosyl-L-methionine = (sulfur carrier)-H + biotin + 2 5'-deoxyadenosine + 2 L-methionine + 2 oxidized [2Fe-2S]-[ferredoxin]. Its pathway is cofactor biosynthesis; biotin biosynthesis; biotin from 7,8-diaminononanoate: step 2/2. Its function is as follows. Catalyzes the conversion of dethiobiotin (DTB) to biotin by the insertion of a sulfur atom into dethiobiotin via a radical-based mechanism. This is Biotin synthase from Polaromonas naphthalenivorans (strain CJ2).